The primary structure comprises 283 residues: MRDSQNTAQTLTESLKYFLKYRDQTVVIKYGGNAMIDEKVKESILKDILLLKTVGIKVVLVHGGGPAIGELLEKYEQKSQFVQGLRVTDKKTAQLALTALAGKVNKSLVQDIIRLGGNAIGVSGIDGKLIEAKPISEDLDYVGEITAIHPEIIERINQTDAVPVIASAGIGLDGEIYNVNADTAASRIAGALSAEQFILLSDVRGLYGNFPDEESFIDEINLTNLEKLVKEKKITDRMIPKIEAIKYAMFEGLGQAVLLDGRVPHALLLELFTDKGQGTMINH.

Substrate is bound by residues 64 to 65, arginine 86, and asparagine 178; that span reads GG.

It belongs to the acetylglutamate kinase family. ArgB subfamily.

The protein localises to the cytoplasm. It catalyses the reaction N-acetyl-L-glutamate + ATP = N-acetyl-L-glutamyl 5-phosphate + ADP. Its pathway is amino-acid biosynthesis; L-arginine biosynthesis; N(2)-acetyl-L-ornithine from L-glutamate: step 2/4. In terms of biological role, catalyzes the ATP-dependent phosphorylation of N-acetyl-L-glutamate. The sequence is that of Acetylglutamate kinase from Lactococcus lactis subsp. lactis (strain IL1403) (Streptococcus lactis).